Reading from the N-terminus, the 223-residue chain is ATP synthase subunit a 1 (223 aa).

5 consecutive transmembrane segments (helical) span residues 20 to 40, 78 to 98, 107 to 127, 173 to 193, and 194 to 214; these read QTIV…AFLT, YLSY…FTII, SLST…LYGI, VMII…LMSV, and LGLL…TVYI.

This sequence belongs to the ATPase A chain family. As to quaternary structure, F-type ATPases have 2 components, CF(1) - the catalytic core - and CF(0) - the membrane proton channel. CF(1) has five subunits: alpha(3), beta(3), gamma(1), delta(1), epsilon(1). CF(0) has four main subunits: a, b, b' and c.

The protein resides in the cell inner membrane. Functionally, key component of the proton channel; it plays a direct role in the translocation of protons across the membrane. The chain is ATP synthase subunit a 1 from Prosthecochloris aestuarii (strain DSM 271 / SK 413).